The primary structure comprises 249 residues: RING finger protein 223 (249 aa).

The tract at residues 1 to 44 (MSSGQQVWHTAVPPPRRSSSIASMPRSPSSAGSPRSPGTPGSER) is disordered. A compositionally biased stretch (low complexity) spans 17–44 (RSSSIASMPRSPSSAGSPRSPGTPGSER). The RING-type zinc-finger motif lies at 51 to 102 (CSICFSGYDNIFKTPKELSCTHVFCLECLARLAAAQPVGRPGGEAVPCPFCR). Residues 199-219 (LVSALLLMLFCVALWPVQCAL) form a helical membrane-spanning segment. Positions 230–249 (PPRPPATSTAASPLGPLTDN) are disordered. The span at 235 to 249 (ATSTAASPLGPLTDN) shows a compositional bias: low complexity.

It localises to the membrane. The polypeptide is RING finger protein 223 (RNF223) (Homo sapiens (Human)).